Consider the following 378-residue polypeptide: Ribosomal RNA large subunit methyltransferase G (378 aa).

Belongs to the methyltransferase superfamily. RlmG family.

It localises to the cytoplasm. It catalyses the reaction guanosine(1835) in 23S rRNA + S-adenosyl-L-methionine = N(2)-methylguanosine(1835) in 23S rRNA + S-adenosyl-L-homocysteine + H(+). Functionally, specifically methylates the guanine in position 1835 (m2G1835) of 23S rRNA. The polypeptide is Ribosomal RNA large subunit methyltransferase G (Escherichia coli O157:H7).